The following is a 267-amino-acid chain: Glutamate racemase (267 aa).

Substrate-binding positions include 13 to 14 (DS) and 45 to 46 (YS). The active-site Proton donor/acceptor is C77. 78 to 79 (NT) is a substrate binding site. C188 (proton donor/acceptor) is an active-site residue. 189-190 (TH) is a binding site for substrate.

Belongs to the aspartate/glutamate racemases family.

The catalysed reaction is L-glutamate = D-glutamate. The protein operates within cell wall biogenesis; peptidoglycan biosynthesis. Its function is as follows. Provides the (R)-glutamate required for cell wall biosynthesis. The polypeptide is Glutamate racemase (Histophilus somni (strain 2336) (Haemophilus somnus)).